Reading from the N-terminus, the 148-residue chain is MCDPTSESQLWRSSSQIPSPCLICRLDHIVMTVKNIEDTTMFYSKILGMEVTTFKGNRKALCFGDQKFNLHEVGKEFDPKAAHPVPGSLDVCLITEAPLEEVIERLKAFDVPIEEGPVFRTGAKGPILSIYFRDPDRNLLEVSSYVTS.

The region spanning 25 to 145 is the VOC domain; sequence RLDHIVMTVK…DRNLLEVSSY (121 aa).

This sequence belongs to the glyoxalase I family.

The sequence is that of Glyoxalase domain-containing protein 5 (Glod5) from Mus musculus (Mouse).